We begin with the raw amino-acid sequence, 421 residues long: MLDPNSRYVSRLTRDTMALILAGGRGSRLHELTDWRAKPALHFGGKFRIIDFPLSNCVNSGIRRVGVLTQYKAHSLIRHLVRGWSHFKKELGEYVEILPASQRYSPNWYQGTADAIYQNLDIILDEAPKYVMVLSGDHVYQMDYGSMLAYHVETGADLTVSCIEVPIEEAAGAFGVMTVDDNNRILRFDEKPKHPTELNDMPGMTLASMGNYIFNTEFLFEQLRADAENPESEHDFGKNIIPAIIKNSNVRAYRFRDHETDRASYWRDVGTLDSFWLANMELVEPSPQLNLYNQDWPIWTYQTHLPPAKFVFDDDDRRGYAVDSMVSGGCIVSGGKVSKSLLFSDVHVHSYTDLEESVVLPNVQIHRHAKIKRAIIDSGCEIPEGMVIGHDHEHDTARGFRVTKKGVVLVTREMLGQLTPK.

Alpha-D-glucose 1-phosphate-binding positions include Tyr-109, Gly-175, 190–191, and Ser-208; that span reads EK.

It belongs to the bacterial/plant glucose-1-phosphate adenylyltransferase family. In terms of assembly, homotetramer.

It carries out the reaction alpha-D-glucose 1-phosphate + ATP + H(+) = ADP-alpha-D-glucose + diphosphate. It functions in the pathway glycan biosynthesis; glycogen biosynthesis. Involved in the biosynthesis of ADP-glucose, a building block required for the elongation reactions to produce glycogen. Catalyzes the reaction between ATP and alpha-D-glucose 1-phosphate (G1P) to produce pyrophosphate and ADP-Glc. The sequence is that of Glucose-1-phosphate adenylyltransferase from Teredinibacter turnerae (strain ATCC 39867 / T7901).